The following is a 445-amino-acid chain: Xylose isomerase (445 aa).

Active-site residues include H109 and D112. Mg(2+)-binding residues include E240, E276, H279, D304, D315, D317, and D347.

The protein belongs to the xylose isomerase family. As to quaternary structure, homotetramer. Mg(2+) serves as cofactor.

The protein resides in the cytoplasm. The catalysed reaction is alpha-D-xylose = alpha-D-xylulofuranose. The sequence is that of Xylose isomerase from Xanthomonas oryzae pv. oryzae (strain MAFF 311018).